A 295-amino-acid polypeptide reads, in one-letter code: Mycothiol acetyltransferase (295 aa).

N-acetyltransferase domains follow at residues 5 to 141 and 149 to 295; these read VEIR…TPLP and VRLR…MYRR. A 1D-myo-inositol 2-(L-cysteinylamino)-2-deoxy-alpha-D-glucopyranoside-binding site is contributed by E35. 76–78 serves as a coordination point for acetyl-CoA; it reads LVV. E176, K215, and E229 together coordinate 1D-myo-inositol 2-(L-cysteinylamino)-2-deoxy-alpha-D-glucopyranoside. Acetyl-CoA is bound by residues 233 to 235 and 240 to 246; these read VGV and RGTGLGR. Position 267 (Y267) interacts with 1D-myo-inositol 2-(L-cysteinylamino)-2-deoxy-alpha-D-glucopyranoside. An acetyl-CoA-binding site is contributed by 272–277; that stretch reads NTAAVR.

Belongs to the acetyltransferase family. MshD subfamily. In terms of assembly, monomer.

The catalysed reaction is 1D-myo-inositol 2-(L-cysteinylamino)-2-deoxy-alpha-D-glucopyranoside + acetyl-CoA = mycothiol + CoA + H(+). In terms of biological role, catalyzes the transfer of acetyl from acetyl-CoA to desacetylmycothiol (Cys-GlcN-Ins) to form mycothiol. The chain is Mycothiol acetyltransferase from Thermobispora bispora (strain ATCC 19993 / DSM 43833 / CBS 139.67 / JCM 10125 / KCTC 9307 / NBRC 14880 / R51).